A 296-amino-acid polypeptide reads, in one-letter code: Arginine/serine-rich protein 1 (296 aa).

The segment at 1 to 131 (MSNYVNDMWP…RSRSRSRERS (131 aa)) is disordered. Ser12 bears the Phosphoserine mark. Residues 20–31 (SASRSGGSSRLS) show a composition bias toward low complexity. The span at 32–125 (SRSRSRSFSR…RSRSRSRSRS (94 aa)) shows a compositional bias: basic residues. Residues Ser111 and Ser113 each carry the phosphoserine modification. Arg141 bears the Omega-N-methylarginine mark. The segment covering 156–165 (ERSRWRDRSR) has biased composition (basic and acidic residues). 2 disordered regions span residues 156–175 (ERSRWRDRSRTRSRSRTPFR) and 217–296 (SHGI…WIPV). Residues 245–261 (EKPSQQRSIAFSSNNSV) are compositionally biased toward polar residues. A compositionally biased stretch (basic and acidic residues) spans 272 to 287 (ATEETSSRSPKIDKKK). Ser280 bears the Phosphoserine mark.

The protein belongs to the RSRP family. Post-translationally, phosphorylated. Phosphorylation at Ser-111 and Ser-113 mediates the interaction with spliceosome proteins.

It is found in the nucleus. Probably acts as a spliceosomal factor that contributes to spliceosome assembly and regulates the isoform switching of proteins such as PARP6. The polypeptide is Arginine/serine-rich protein 1 (RSRP1) (Macaca fascicularis (Crab-eating macaque)).